A 181-amino-acid chain; its full sequence is PLAT domain-containing protein 1 (181 aa).

An N-terminal signal peptide occupies residues 1-14 (MARRDVLLPFLLLL). N-acetylalanine is present on Ala-15. Positions 29-156 (CVYTFYLRTG…SPYELTAVRN (128 aa)) constitute a PLAT domain.

As to expression, expressed in root tips, pericycle cells, lateral root primordia, stomata, leaf vasculature, hydathodes and floral organs.

The protein resides in the endoplasmic reticulum. Its subcellular location is the plastid. The protein localises to the chloroplast. It is found in the plastoglobule. Positive regulator of abiotic stress tolerance involved in the regulation of plant growth. May be a downstream target of the abscisic acid (ABA) signaling pathway. This is PLAT domain-containing protein 1 from Arabidopsis thaliana (Mouse-ear cress).